Reading from the N-terminus, the 297-residue chain is Acetyl-coenzyme A carboxylase carboxyl transferase subunit beta (297 aa).

Residues 1–23 (MSWIERILGRTSSSSSSSKSKVP) are disordered. In terms of domain architecture, CoA carboxyltransferase N-terminal spans 26-295 (VWTKCTSCEQ…PFKTAELIVE (270 aa)). Zn(2+) is bound by residues C30, C33, C49, and C52. The C4-type zinc-finger motif lies at 30–52 (CTSCEQVLYSEELKRNMHVCPKC).

It belongs to the AccD/PCCB family. Acetyl-CoA carboxylase is a heterohexamer composed of biotin carboxyl carrier protein (AccB), biotin carboxylase (AccC) and two subunits each of ACCase subunit alpha (AccA) and ACCase subunit beta (AccD). Zn(2+) serves as cofactor.

The protein localises to the cytoplasm. It carries out the reaction N(6)-carboxybiotinyl-L-lysyl-[protein] + acetyl-CoA = N(6)-biotinyl-L-lysyl-[protein] + malonyl-CoA. Its pathway is lipid metabolism; malonyl-CoA biosynthesis; malonyl-CoA from acetyl-CoA: step 1/1. Its function is as follows. Component of the acetyl coenzyme A carboxylase (ACC) complex. Biotin carboxylase (BC) catalyzes the carboxylation of biotin on its carrier protein (BCCP) and then the CO(2) group is transferred by the transcarboxylase to acetyl-CoA to form malonyl-CoA. This chain is Acetyl-coenzyme A carboxylase carboxyl transferase subunit beta, found in Actinobacillus pleuropneumoniae serotype 5b (strain L20).